We begin with the raw amino-acid sequence, 449 residues long: Asparagine--tRNA ligase (449 aa).

The protein belongs to the class-II aminoacyl-tRNA synthetase family. As to quaternary structure, homodimer.

It localises to the cytoplasm. The enzyme catalyses tRNA(Asn) + L-asparagine + ATP = L-asparaginyl-tRNA(Asn) + AMP + diphosphate + H(+). The polypeptide is Asparagine--tRNA ligase (Mesomycoplasma hyopneumoniae (strain 7448) (Mycoplasma hyopneumoniae)).